A 92-amino-acid chain; its full sequence is Dolichol-phosphate mannosyltransferase subunit 3 (92 aa).

Transmembrane regions (helical) follow at residues 8–28 (LWGL…ALGL) and 37–57 (VLWP…LGTV).

It belongs to the DPM3 family. In terms of assembly, component of the dolichol-phosphate mannose (DPM) synthase complex composed of DPM1, DPM2 and DPM3; within the complex, associates with DPM1 via its C-terminal domain and with DPM2 via its N-terminal portion. This interaction stabilizes DPM1 protein.

It is found in the endoplasmic reticulum membrane. It functions in the pathway protein modification; protein glycosylation. Stabilizer subunit of the dolichol-phosphate mannose (DPM) synthase complex; tethers catalytic subunit DPM1 to the endoplasmic reticulum. This is Dolichol-phosphate mannosyltransferase subunit 3 (DPM3) from Homo sapiens (Human).